We begin with the raw amino-acid sequence, 210 residues long: Prolactin (210 aa).

An N-terminal signal peptide occupies residues 1-23 (MARRSQGTKLHLAVLCLVVSCHA). Disulfide bonds link Cys69–Cys183 and Cys200–Cys210.

This sequence belongs to the somatotropin/prolactin family.

It is found in the secreted. This Oncorhynchus mykiss (Rainbow trout) protein is Prolactin (prl).